The chain runs to 413 residues: MAPPSVFAEVPQAQPVLVFKLTADFREDPDPRKVNLGVGAYRTDDCHPWVLPVVKKVEQKIANDNSLNHEYLPILGLAEFRSCASRLALGDDSPALKEKRVGGVQSLGGTGALRIGADFLARWYNGTNNKNTPVYVSSPTWENHNAVFSAAGFKDIRSYRYWDAEKRGLDLQGFLNDLENAPEFSIVVLHACAHNPTGIDPTPEQWKQIASVMKHRFLFPFFDSAYQGFASGNLERDAWAIRYFVSEGFEFFCAQSFSKNFGLYNERVGNLTVVGKEPESILQVLSQMEKIVRITWSNPPAQGARIVASTLSNPELFEEWTGNVKTMADRILTMRSELRARLEALKTPGTWNHITDQIGMFSFTGLNPKQVEYLVNEKHIYLLPSGRINVSGLTTKNLDYVATSIHEAVTKIQ.

Residues glycine 39 and tryptophan 141 each coordinate L-aspartate. Serine 149 carries the post-translational modification Phosphoserine. Asparagine 195 contributes to the L-aspartate binding site. An N6-(pyridoxal phosphate)lysine modification is found at lysine 259. Residue arginine 387 participates in L-aspartate binding.

Belongs to the class-I pyridoxal-phosphate-dependent aminotransferase family. Homodimer. The cofactor is pyridoxal 5'-phosphate.

It localises to the cytoplasm. The enzyme catalyses L-aspartate + 2-oxoglutarate = oxaloacetate + L-glutamate. It carries out the reaction L-cysteine + 2-oxoglutarate = 2-oxo-3-sulfanylpropanoate + L-glutamate. It catalyses the reaction (2S)-2-aminobutanoate + 2-oxoglutarate = 2-oxobutanoate + L-glutamate. The catalysed reaction is 3-sulfino-L-alanine + 2-oxoglutarate = 3-sulfinopyruvate + L-glutamate. Functionally, biosynthesis of L-glutamate from L-aspartate or L-cysteine. Important regulator of levels of glutamate, the major excitatory neurotransmitter of the vertebrate central nervous system. Acts as a scavenger of glutamate in brain neuroprotection. The aspartate aminotransferase activity is involved in hepatic glucose synthesis during development and in adipocyte glyceroneogenesis. Using L-cysteine as substrate, regulates levels of mercaptopyruvate, an important source of hydrogen sulfide. Mercaptopyruvate is converted into H(2)S via the action of 3-mercaptopyruvate sulfurtransferase (3MST). Hydrogen sulfide is an important synaptic modulator and neuroprotectant in the brain. In addition, catalyzes (2S)-2-aminobutanoate, a by-product in the cysteine biosynthesis pathway. In Homo sapiens (Human), this protein is Aspartate aminotransferase, cytoplasmic.